A 346-amino-acid chain; its full sequence is D-amino-acid oxidase (346 aa).

Residues Gly22, Ile24, Thr52, Thr53, Ser54, Ala58, Ala59, Leu60, and Thr187 each contribute to the FAD site. Residues Tyr227 and Arg284 each coordinate D-proline. Positions 227 and 284 each coordinate D-serine. FAD is bound by residues Arg284, Gly311, Gly312, Gly314, and Thr316. Residue Arg284 coordinates D-dopa. D-proline is bound at residue Gly312. A D-serine-binding site is contributed by Gly312. Gly312 is a D-dopa binding site. A Microbody targeting signal motif is present at residues 344–346; the sequence is SKL.

The protein belongs to the DAMOX/DASOX family. The cofactor is FAD.

The protein localises to the peroxisome matrix. The enzyme catalyses a D-alpha-amino acid + O2 + H2O = a 2-oxocarboxylate + H2O2 + NH4(+). It carries out the reaction D-serine + O2 + H2O = 3-hydroxypyruvate + H2O2 + NH4(+). The catalysed reaction is D-phenylalanine + O2 + H2O = 3-phenylpyruvate + H2O2 + NH4(+). It catalyses the reaction D-alanine + O2 + H2O = pyruvate + H2O2 + NH4(+). The enzyme catalyses D-arginine + O2 + H2O = 5-guanidino-2-oxopentanoate + H2O2 + NH4(+). It carries out the reaction D-methionine + O2 + H2O = 4-methylsulfanyl-2-oxobutanoate + H2O2 + NH4(+). The catalysed reaction is D-ornithine + O2 + H2O = 5-amino-2-oxopentanoate + H2O2 + NH4(+). It catalyses the reaction D-leucine + O2 + H2O = 4-methyl-2-oxopentanoate + H2O2 + NH4(+). The enzyme catalyses D-lysine + O2 + H2O = 6-amino-2-oxohexanoate + H2O2 + NH4(+). It carries out the reaction D-proline + O2 = 1-pyrroline-2-carboxylate + H2O2. The catalysed reaction is D-valine + O2 + H2O = 3-methyl-2-oxobutanoate + H2O2 + NH4(+). It catalyses the reaction D-histidine + O2 + H2O = 3-(imidazol-5-yl)pyruvate + H2O2 + NH4(+). Its function is as follows. Catalyzes the oxidative deamination of D-amino acids with broad substrate specificity. Has low in vitro and no in vivo activity on D-serine; primary D-serine degradation is performed by the D-serine dehydratase dsd. This Dictyostelium discoideum (Social amoeba) protein is D-amino-acid oxidase (ddo-1).